Consider the following 369-residue polypeptide: Phospho-N-acetylmuramoyl-pentapeptide-transferase (369 aa).

10 consecutive transmembrane segments (helical) span residues 2–22 (IPLL…TQLF), 55–75 (AVVI…SWWI), 82–102 (PSVS…VGFL), 120–140 (AKLI…INFA), 163–183 (LAFA…NLII), 196–216 (LDGL…LIGI), 240–260 (PLDL…FLWW), 267–287 (IFMG…FAIL), 292–312 (ILLA…ILQV), and 349–369 (ILGG…WVVF).

This sequence belongs to the glycosyltransferase 4 family. MraY subfamily. It depends on Mg(2+) as a cofactor.

Its subcellular location is the cell membrane. The enzyme catalyses UDP-N-acetyl-alpha-D-muramoyl-L-alanyl-gamma-D-glutamyl-meso-2,6-diaminopimeloyl-D-alanyl-D-alanine + di-trans,octa-cis-undecaprenyl phosphate = di-trans,octa-cis-undecaprenyl diphospho-N-acetyl-alpha-D-muramoyl-L-alanyl-D-glutamyl-meso-2,6-diaminopimeloyl-D-alanyl-D-alanine + UMP. It functions in the pathway cell wall biogenesis; peptidoglycan biosynthesis. Catalyzes the initial step of the lipid cycle reactions in the biosynthesis of the cell wall peptidoglycan: transfers peptidoglycan precursor phospho-MurNAc-pentapeptide from UDP-MurNAc-pentapeptide onto the lipid carrier undecaprenyl phosphate, yielding undecaprenyl-pyrophosphoryl-MurNAc-pentapeptide, known as lipid I. The protein is Phospho-N-acetylmuramoyl-pentapeptide-transferase of Renibacterium salmoninarum (strain ATCC 33209 / DSM 20767 / JCM 11484 / NBRC 15589 / NCIMB 2235).